We begin with the raw amino-acid sequence, 315 residues long: tRNA dimethylallyltransferase (315 aa).

Gly-13–Thr-20 lines the ATP pocket. Thr-15–Thr-20 is a binding site for substrate. The interaction with substrate tRNA stretch occupies residues Asp-38 to Leu-41.

It belongs to the IPP transferase family. Monomer. Requires Mg(2+) as cofactor.

The catalysed reaction is adenosine(37) in tRNA + dimethylallyl diphosphate = N(6)-dimethylallyladenosine(37) in tRNA + diphosphate. Its function is as follows. Catalyzes the transfer of a dimethylallyl group onto the adenine at position 37 in tRNAs that read codons beginning with uridine, leading to the formation of N6-(dimethylallyl)adenosine (i(6)A). This chain is tRNA dimethylallyltransferase, found in Herpetosiphon aurantiacus (strain ATCC 23779 / DSM 785 / 114-95).